The primary structure comprises 330 residues: ADP-L-glycero-D-manno-heptose-6-epimerase (330 aa).

Residues 11–12, 32–33, Lys-39, Lys-54, 75–79, and Asn-92 each bind NADP(+); these read FI, DN, and EGACS. The active-site Proton acceptor is the Tyr-139. Lys-143 lines the NADP(+) pocket. Position 168 (Asn-168) interacts with substrate. NADP(+) is bound by residues Val-169 and Lys-177. The active-site Proton acceptor is the Lys-177. Substrate contacts are provided by residues Arg-179, His-186, 200-203, Arg-213, and Tyr-292; that span reads FGEY.

The protein belongs to the NAD(P)-dependent epimerase/dehydratase family. HldD subfamily. As to quaternary structure, homopentamer. Requires NADP(+) as cofactor.

The catalysed reaction is ADP-D-glycero-beta-D-manno-heptose = ADP-L-glycero-beta-D-manno-heptose. Its pathway is nucleotide-sugar biosynthesis; ADP-L-glycero-beta-D-manno-heptose biosynthesis; ADP-L-glycero-beta-D-manno-heptose from D-glycero-beta-D-manno-heptose 7-phosphate: step 4/4. Functionally, catalyzes the interconversion between ADP-D-glycero-beta-D-manno-heptose and ADP-L-glycero-beta-D-manno-heptose via an epimerization at carbon 6 of the heptose. The polypeptide is ADP-L-glycero-D-manno-heptose-6-epimerase (Burkholderia ambifaria (strain MC40-6)).